The sequence spans 1017 residues: Type VI secretion system spike protein VgrG3 (1017 aa).

D842 is an active-site residue.

Belongs to the VgrG protein family. In terms of assembly, interacts with TsiV3. Interacts with TseL.

The protein localises to the secreted. In terms of biological role, part of the type VI secretion system specialized secretion system, which delivers several virulence factors in both prokaryotic and eukaryotic cells during infection. Forms the spike at the tip of the elongating tube formed by haemolysin co-regulated protein Hcp. Allows the delivery of the TseL antibacterial toxin to target cells where it exerts its toxicity. Additionally, acts directly as an effector and targets the cell wall peptidoglycan layer of prey cells for degradation via its C-terminus. Toxicity is counteracted by a cognate immunity protein TsiV3. This chain is Type VI secretion system spike protein VgrG3, found in Vibrio cholerae serotype O1 (strain ATCC 39315 / El Tor Inaba N16961).